The primary structure comprises 65 residues: Vespid chemotactic peptide 5h (65 aa).

Residues 1–23 (MKYNIVFLFAIIASLACLQLTFA) form the signal peptide. 7 AXPX repeats span residues 23–26 (AAPA), 27–30 (ASPL), 31–34 (ANPG), 35–38 (ASPD), 39–42 (AAPN), 43–46 (ADPL), and 47–50 (ADPF). Residues 24-49 (APAASPLANPGASPDAAPNADPLADP) constitute a propeptide that is removed on maturation. At Leu62 the chain carries Leucine amide.

Belongs to the MCD family. Crabrolin subfamily. In terms of tissue distribution, expressed by the venom gland.

It is found in the secreted. Its function is as follows. Shows antimicrobial activity against the Gram-negative bacteria E.coli ATCC 25922 (MIC=30 ug/ml), the Gram-positive bacteria S.aureus ATCC 2592 (MIC=5 ug/ml) and the fungus C.albicans ATCC 2002 (MIC=25 ug/ml). Acts as a mast cell degranulating peptide. Its mast cell degranulation activity may be related to the activation of G-protein coupled receptors in mast cells as well as interaction with other proteins located in cell endosomal membranes in the mast cells. Induces the chemotaxis of neutrophils. In Vespa magnifica (Hornet), this protein is Vespid chemotactic peptide 5h.